A 354-amino-acid polypeptide reads, in one-letter code: Protein-arginine kinase (354 aa).

In terms of domain architecture, Phosphagen kinase C-terminal spans 24 to 254 (IVLSSRIRLA…QQIIQQEKMA (231 aa)). ATP-binding positions include 27–31 (SSRIR), His-92, Arg-125, 176–180 (RASVM), and 207–212 (RGIYGE). The RDXXRA motif of the pArg binding pocket involved in allosteric regulation signature appears at 337 to 342 (RDYRRA).

The protein belongs to the ATP:guanido phosphotransferase family.

It catalyses the reaction L-arginyl-[protein] + ATP = N(omega)-phospho-L-arginyl-[protein] + ADP + H(+). Its activity is regulated as follows. Appears to be allosterically activated by the binding of pArg-containing polypeptides to the pArg-binding pocket localized in the C-terminal domain of McsB. Functionally, catalyzes the specific phosphorylation of arginine residues in a large number of proteins. Is part of the bacterial stress response system. Protein arginine phosphorylation has a physiologically important role and is involved in the regulation of many critical cellular processes, such as protein homeostasis, motility, competence, and stringent and stress responses, by regulating gene expression and protein activity. The sequence is that of Protein-arginine kinase from Bacillus anthracis (strain A0248).